The sequence spans 172 residues: Transcriptional repressor NrdR (172 aa).

A zinc finger spans residues C3 to C34. The region spanning P49–A139 is the ATP-cone domain.

The protein belongs to the NrdR family. Zn(2+) is required as a cofactor.

Its function is as follows. Negatively regulates transcription of bacterial ribonucleotide reductase nrd genes and operons by binding to NrdR-boxes. This Thioalkalivibrio sulfidiphilus (strain HL-EbGR7) protein is Transcriptional repressor NrdR.